We begin with the raw amino-acid sequence, 339 residues long: DNA double-strand break repair nuclease NurA (339 aa).

2 residues coordinate Mn(2+): Asp-58 and Asp-133.

It belongs to the NurA family. Homodimer. Forms a complex with HerA. Mn(2+) serves as cofactor.

With respect to regulation, nuclease activity requires the presence of HerA. Another report shows endo- and exonuclease activity in the absence of HerA; HerA stimulates the exo- but not endonuclease. LhrC-Core (Hel112) inhibits the exonuclease activity of the HerA-NurA complex on ss- and dsDNA, has no effect on the nicking activity of NurA. Endo- and exonuclease activities are inhibited by ATP; ATP may subtract divalent ions from the reaction preventing nuclease activity, HerA can alleviate ATP inhibition. Involved in DNA double-strand break (DSB) repair. Probably acts with HerA to stimulate resection of the 5' strand and produce the long 3' single-strand that is required for RadA loading. NurA and HerA together stimulate the end-resection of six nucleotides of a linear DNA substrate. Processes linear double-stranded (ds)DNA probes with 3' or 5' single-stranded overhangs or blunt ends. Has endonuclease activity on single-stranded (ss)DNA and nicking activity on dsDNA without HerA as well as 5'- and 3'-exonuclease activity on ssDNA. Binds ssDNA, dsDNA, forked and bubble DNA equally well. The chain is DNA double-strand break repair nuclease NurA from Saccharolobus solfataricus (strain ATCC 35092 / DSM 1617 / JCM 11322 / P2) (Sulfolobus solfataricus).